We begin with the raw amino-acid sequence, 617 residues long: Tetratricopeptide repeat protein 39B (617 aa).

2 TPR repeats span residues 328–361 (SLIL…QEEW) and 561–594 (PFTL…YKDY).

It belongs to the TTC39 family.

In terms of biological role, regulates high density lipoprotein (HDL) cholesterol metabolism by promoting the ubiquitination and degradation of the oxysterols receptors LXR (NR1H2 and NR1H3). The sequence is that of Tetratricopeptide repeat protein 39B (Ttc39b) from Rattus norvegicus (Rat).